Consider the following 157-residue polypeptide: MRIGIGIDVHQFSEDRKLIVGGVEVPSPVGLLGHSDADVLLHAISDALLGAAALGDIGKHFPDTSPDYKDADSMELLKHVGKLLEQEGYKPVNIDTMLLLEKPKIAPYIEQMRRNIASCLDMDMNDVSVKATTNEKLGYVGRQEGACAHAVCLIEKK.

A divalent metal cation-binding residues include D8 and H10. Residues D8–H10 and H34–S35 contribute to the 4-CDP-2-C-methyl-D-erythritol 2-phosphate site. H42 serves as a coordination point for a divalent metal cation. Residues D56–G58, T132–E135, and R142 each bind 4-CDP-2-C-methyl-D-erythritol 2-phosphate.

Belongs to the IspF family. In terms of assembly, homotrimer. The cofactor is a divalent metal cation.

The enzyme catalyses 4-CDP-2-C-methyl-D-erythritol 2-phosphate = 2-C-methyl-D-erythritol 2,4-cyclic diphosphate + CMP. Its pathway is isoprenoid biosynthesis; isopentenyl diphosphate biosynthesis via DXP pathway; isopentenyl diphosphate from 1-deoxy-D-xylulose 5-phosphate: step 4/6. Functionally, involved in the biosynthesis of isopentenyl diphosphate (IPP) and dimethylallyl diphosphate (DMAPP), two major building blocks of isoprenoid compounds. Catalyzes the conversion of 4-diphosphocytidyl-2-C-methyl-D-erythritol 2-phosphate (CDP-ME2P) to 2-C-methyl-D-erythritol 2,4-cyclodiphosphate (ME-CPP) with a corresponding release of cytidine 5-monophosphate (CMP). This chain is 2-C-methyl-D-erythritol 2,4-cyclodiphosphate synthase, found in Chlorobaculum parvum (strain DSM 263 / NCIMB 8327) (Chlorobium vibrioforme subsp. thiosulfatophilum).